The following is a 374-amino-acid chain: Protein STRICTOSIDINE SYNTHASE-LIKE 10 (374 aa).

The N-terminal stretch at 1–18 (MTMMIITVFLTVIAAVLA) is a signal peptide. N-linked (GlcNAc...) asparagine glycosylation is present at Asn50.

It belongs to the strictosidine synthase family.

It is found in the vacuole. In Arabidopsis thaliana (Mouse-ear cress), this protein is Protein STRICTOSIDINE SYNTHASE-LIKE 10.